The primary structure comprises 1416 residues: Uveal autoantigen with coiled-coil domains and ankyrin repeats (1416 aa).

The residue at position 1 (Met1) is an N-acetylmethionine. Positions 1 to 24 are disordered; it reads MKSLKSRLRRQDVPGPASSGAAAA. 6 ANK repeats span residues 38–66, 67–96, 100–129, 133–162, 166–195, and 199–228; these read LMKA…KLDV, EGRS…DITT, AGRN…PTEH, QGRT…SVNA, DGRT…DVNS, and QNRT…DISL. Coiled coils occupy residues 286 to 374 and 438 to 1386; these read VKSH…NRFK and ENEI…IYRT. Residue Lys1035 forms a Glycyl lysine isopeptide (Lys-Gly) (interchain with G-Cter in SUMO2) linkage.

Component of the apoptosome complex, composed of APAF1, pro-caspase-9 and UACA. In the complex, it probably interacts directly with APAF1. Interacts with LGALS3, ARF6 and ACTB. Interacts with RAB39A. In terms of tissue distribution, highly expressed in skeletal muscle, heart, kidney and pancreas. Expressed in choroid, retina and epidermal melanocytes. Expressed in eye muscles and thyroid follicular cells.

The protein resides in the nucleus. Its subcellular location is the cytoplasm. It localises to the cytoskeleton. In terms of biological role, regulates APAF1 expression and plays an important role in the regulation of stress-induced apoptosis. Promotes apoptosis by regulating three pathways, apoptosome up-regulation, LGALS3/galectin-3 down-regulation and NF-kappa-B inactivation. Regulates the redistribution of APAF1 into the nucleus after proapoptotic stress. Down-regulates the expression of LGALS3 by inhibiting NFKB1. Modulates isoactin dynamics to regulate the morphological alterations required for cell growth and motility. Interaction with ARF6 may modulate cell shape and motility after injury. May be involved in multiple neurite formation. The sequence is that of Uveal autoantigen with coiled-coil domains and ankyrin repeats (UACA) from Homo sapiens (Human).